Here is a 103-residue protein sequence, read N- to C-terminus: Large ribosomal subunit protein bL21 (103 aa).

This sequence belongs to the bacterial ribosomal protein bL21 family. In terms of assembly, part of the 50S ribosomal subunit. Contacts protein L20.

This protein binds to 23S rRNA in the presence of protein L20. The protein is Large ribosomal subunit protein bL21 of Acidithiobacillus ferrooxidans (strain ATCC 23270 / DSM 14882 / CIP 104768 / NCIMB 8455) (Ferrobacillus ferrooxidans (strain ATCC 23270)).